A 629-amino-acid polypeptide reads, in one-letter code: Chaperone protein HtpG (629 aa).

Positions 1–337 are a; substrate-binding; sequence MAASKETMQF…SSDLPLNVSR (337 aa). The tract at residues 338 to 554 is b; sequence EILQGNRVID…ERDMALYMQQ (217 aa). Residues 555 to 629 form a c region; that stretch reads LLKQAGHEIS…INQLMLALAG (75 aa).

This sequence belongs to the heat shock protein 90 family. In terms of assembly, homodimer.

It is found in the cytoplasm. Functionally, molecular chaperone. Has ATPase activity. In Acidithiobacillus ferrooxidans (strain ATCC 23270 / DSM 14882 / CIP 104768 / NCIMB 8455) (Ferrobacillus ferrooxidans (strain ATCC 23270)), this protein is Chaperone protein HtpG.